The following is a 342-amino-acid chain: L-lysine 2,3-aminomutase (342 aa).

In terms of domain architecture, Radical SAM core spans 106–329 (HKYQNRALLL…PRLAREIGGE (224 aa)). Residues Cys120, Cys124, and Cys127 each coordinate [4Fe-4S] cluster. Lys332 is subject to N6-(pyridoxal phosphate)lysine.

Belongs to the radical SAM superfamily. KamA family. [4Fe-4S] cluster is required as a cofactor. It depends on pyridoxal 5'-phosphate as a cofactor.

The catalysed reaction is L-lysine = D-beta-lysine. With EpmA is involved in the beta-lysylation step of the post-translational modification of translation elongation factor P (EF-P) on 'Lys-34'. EpmB appears to act before EpmA. Displays lysine 2,3-aminomutase activity, producing (R)-beta-lysine from (S)-alpha-lysine (L-lysine). The polypeptide is L-lysine 2,3-aminomutase (epmB) (Salmonella typhimurium (strain LT2 / SGSC1412 / ATCC 700720)).